The chain runs to 488 residues: Inosine-5'-monophosphate dehydrogenase (488 aa).

CBS domains follow at residues 94-150 (IVSE…SKTV) and 154-215 (MTKK…CKDE). NAD(+)-binding positions include Asp-249, 249 to 251 (DSS), and 299 to 301 (GIG). K(+)-binding residues include Gly-301 and Gly-303. Ser-304 contacts IMP. Residue Cys-306 participates in K(+) binding. Residue Cys-306 is the Thioimidate intermediate of the active site. Residues 339 to 341 (DGG), 362 to 363 (GS), and 386 to 390 (YRGMG) contribute to the IMP site. The active-site Proton acceptor is the Arg-402. Glu-416 contributes to the IMP binding site. Positions 470, 471, and 472 each coordinate K(+).

This sequence belongs to the IMPDH/GMPR family. As to quaternary structure, homotetramer. K(+) serves as cofactor.

It catalyses the reaction IMP + NAD(+) + H2O = XMP + NADH + H(+). The protein operates within purine metabolism; XMP biosynthesis via de novo pathway; XMP from IMP: step 1/1. With respect to regulation, mycophenolic acid (MPA) is a non-competitive inhibitor that prevents formation of the closed enzyme conformation by binding to the same site as the amobile flap. In contrast, mizoribine monophosphate (MZP) is a competitive inhibitor that induces the closed conformation. MPA is a potent inhibitor of mammalian IMPDHs but a poor inhibitor of the bacterial enzymes. MZP is a more potent inhibitor of bacterial IMPDH. Functionally, catalyzes the conversion of inosine 5'-phosphate (IMP) to xanthosine 5'-phosphate (XMP), the first committed and rate-limiting step in the de novo synthesis of guanine nucleotides, and therefore plays an important role in the regulation of cell growth. This is Inosine-5'-monophosphate dehydrogenase from Haemophilus influenzae (strain ATCC 51907 / DSM 11121 / KW20 / Rd).